Reading from the N-terminus, the 563-residue chain is Dihydroxy-acid dehydratase (563 aa).

Residue D78 coordinates Mg(2+). C119 contributes to the [2Fe-2S] cluster binding site. Positions 120 and 121 each coordinate Mg(2+). An N6-carboxylysine modification is found at K121. C191 is a binding site for [2Fe-2S] cluster. E442 is a Mg(2+) binding site. S468 (proton acceptor) is an active-site residue.

The protein belongs to the IlvD/Edd family. In terms of assembly, homodimer. It depends on [2Fe-2S] cluster as a cofactor. Requires Mg(2+) as cofactor.

It carries out the reaction (2R)-2,3-dihydroxy-3-methylbutanoate = 3-methyl-2-oxobutanoate + H2O. It catalyses the reaction (2R,3R)-2,3-dihydroxy-3-methylpentanoate = (S)-3-methyl-2-oxopentanoate + H2O. Its pathway is amino-acid biosynthesis; L-isoleucine biosynthesis; L-isoleucine from 2-oxobutanoate: step 3/4. The protein operates within amino-acid biosynthesis; L-valine biosynthesis; L-valine from pyruvate: step 3/4. Functionally, functions in the biosynthesis of branched-chain amino acids. Catalyzes the dehydration of (2R,3R)-2,3-dihydroxy-3-methylpentanoate (2,3-dihydroxy-3-methylvalerate) into 2-oxo-3-methylpentanoate (2-oxo-3-methylvalerate) and of (2R)-2,3-dihydroxy-3-methylbutanoate (2,3-dihydroxyisovalerate) into 2-oxo-3-methylbutanoate (2-oxoisovalerate), the penultimate precursor to L-isoleucine and L-valine, respectively. In Desulfitobacterium hafniense (strain DSM 10664 / DCB-2), this protein is Dihydroxy-acid dehydratase.